The chain runs to 104 residues: Large ribosomal subunit protein uL24 (104 aa).

It belongs to the universal ribosomal protein uL24 family. In terms of assembly, part of the 50S ribosomal subunit.

In terms of biological role, one of two assembly initiator proteins, it binds directly to the 5'-end of the 23S rRNA, where it nucleates assembly of the 50S subunit. Functionally, one of the proteins that surrounds the polypeptide exit tunnel on the outside of the subunit. This is Large ribosomal subunit protein uL24 from Halothermothrix orenii (strain H 168 / OCM 544 / DSM 9562).